A 254-amino-acid polypeptide reads, in one-letter code: MVLCVQGLCPLLAVEQIGQRPLWAQSLELPQQVMQPLSAGAFLEEAVEESPAQPEREPKVVDPEEDLLCIAKTFSYLRESGWYWGSITASEARQHLQKMPEGTFLVRDSTHPSYLFTLSVKTTRGPTNVRIEYADSSFRLDSNCLSRPRILAFPDVVSLVQHYVASCAADTRSDSPDLATTPALPTPKEDAPGDPALPATAVHLKLVQPFVRRSSTRSLQHLCRLVINRLVVDVDCLPLPRRMADYLRQYPFQL.

Residues 82–188 (WYWGSITASE…ATTPALPTPK (107 aa)) form the SH2 domain. The disordered stretch occupies residues 171–195 (TRSDSPDLATTPALPTPKEDAPGDP). The region spanning 205 to 253 (KLVQPFVRRSSTRSLQHLCRLVINRLVVDVDCLPLPRRMADYLRQYPFQ) is the SOCS box domain.

Stably associated with the tyrosine-phosphorylated IL3 receptor beta chain and tyrosine-phosphorylated EPO receptor (EPOR).

The protein operates within protein modification; protein ubiquitination. In terms of biological role, SOCS family proteins form part of a classical negative feedback system that regulates cytokine signal transduction. CIS is involved in the negative regulation of cytokines that signal through the JAK-STAT5 pathway such as erythropoietin, prolactin and interleukin 3 (IL3) receptor. Inhibits STAT5 trans-activation by suppressing its tyrosine phosphorylation. May be a substrate recognition component of a SCF-like ECS (Elongin BC-CUL2/5-SOCS-box protein) E3 ubiquitin-protein ligase complex which mediates the ubiquitination and subsequent proteasomal degradation of target proteins. The sequence is that of Cytokine-inducible SH2-containing protein (CISH) from Bos taurus (Bovine).